A 463-amino-acid chain; its full sequence is Argininosuccinate lyase (463 aa).

The protein belongs to the lyase 1 family. Argininosuccinate lyase subfamily.

Its subcellular location is the cytoplasm. The enzyme catalyses 2-(N(omega)-L-arginino)succinate = fumarate + L-arginine. Its pathway is amino-acid biosynthesis; L-arginine biosynthesis; L-arginine from L-ornithine and carbamoyl phosphate: step 3/3. This is Argininosuccinate lyase from Bradyrhizobium sp. (strain BTAi1 / ATCC BAA-1182).